Consider the following 206-residue polypeptide: Delta and osm-11 homolog protein 1 (206 aa).

The protein is Delta and osm-11 homolog protein 1 (dos-1) of Caenorhabditis elegans.